A 379-amino-acid polypeptide reads, in one-letter code: Leukocyte elastase inhibitor (379 aa).

An N-acetylmethionine modification is found at M1. Residues K137 and K177 each carry the N6-acetyllysine modification. S300 carries the post-translational modification Phosphoserine. Positions 351–379 (NFTADHPFLFFIRHNSSGSILFLGRFSSP) are CARD-binding motif (CBM).

Belongs to the serpin family. Ov-serpin subfamily. In terms of assembly, monomer. Interacts (via C-terminus) with CASP1; CASP4 (via CARD domain) and CASP5; these interactions regulate the activity of inflammatory caspases. Interacts with PRTN3. Interacts with GZMH. In terms of tissue distribution, in human bone marrow, present in all CD45+ populations. Expression levels are highest in the neutrophil lineage, intermediate in monocytic, and lowest in lymphocytic lineage. Within the neutrophil lineage, expression is highest in promyelocytes.

The protein resides in the secreted. Its subcellular location is the cytoplasm. The protein localises to the cytolytic granule. It is found in the early endosome. In terms of biological role, neutrophil serine protease inhibitor that plays an essential role in the regulation of the innate immune response, inflammation and cellular homeostasis. Acts primarily to protect the cell from proteases released in the cytoplasm during stress or infection. These proteases are important in killing microbes but when released from granules, these potent enzymes also destroy host proteins and contribute to mortality. Regulates the activity of the neutrophil proteases elastase, cathepsin G, proteinase-3, chymase, chymotrypsin, and kallikrein-3. Also acts as a potent intracellular inhibitor of GZMH by directly blocking its proteolytic activity. During inflammation, limits the activity of inflammatory caspases CASP1, CASP4 and CASP5 by suppressing their caspase-recruitment domain (CARD) oligomerization and enzymatic activation. When secreted, promotes the proliferation of beta-cells via its protease inhibitory function. The polypeptide is Leukocyte elastase inhibitor (SERPINB1) (Homo sapiens (Human)).